Consider the following 647-residue polypeptide: DNA polymerase subunit gamma-1 (647 aa).

The interval 116-147 (ERPGRAEQSQMQDEDGLPELVEESSQPSFHHG) is disordered. Positions 127-137 (QDEDGLPELVE) are enriched in acidic residues.

This sequence belongs to the DNA polymerase type-A family. Heterotrimer composed of a catalytic subunit and a homodimer of accessory subunits. Interacts with TTC3. The cofactor is Mg(2+).

It localises to the mitochondrion. Its subcellular location is the mitochondrion matrix. The protein localises to the mitochondrion nucleoid. It catalyses the reaction DNA(n) + a 2'-deoxyribonucleoside 5'-triphosphate = DNA(n+1) + diphosphate. Functionally, involved in the replication of mitochondrial DNA. Associates with mitochondrial DNA. The protein is DNA polymerase subunit gamma-1 (POLG) of Gallus gallus (Chicken).